Consider the following 252-residue polypeptide: Chitooligosaccharide deacetylase (252 aa).

Mg(2+)-binding residues include histidine 61 and histidine 125.

The protein belongs to the YdjC deacetylase family. ChbG subfamily. In terms of assembly, homodimer. Requires Mg(2+) as cofactor.

It is found in the cytoplasm. The enzyme catalyses N,N'-diacetylchitobiose + H2O = N-acetyl-beta-D-glucosaminyl-(1-&gt;4)-D-glucosamine + acetate. It catalyses the reaction diacetylchitobiose-6'-phosphate + H2O = N'-monoacetylchitobiose-6'-phosphate + acetate. It functions in the pathway glycan degradation; chitin degradation. Involved in the degradation of chitin. ChbG is essential for growth on the acetylated chitooligosaccharides chitobiose and chitotriose but is dispensable for growth on cellobiose and chitosan dimer, the deacetylated form of chitobiose. Deacetylation of chitobiose-6-P and chitotriose-6-P is necessary for both the activation of the chb promoter by the regulatory protein ChbR and the hydrolysis of phosphorylated beta-glucosides by the phospho-beta-glucosidase ChbF. Catalyzes the removal of only one acetyl group from chitobiose-6-P to yield monoacetylchitobiose-6-P, the inducer of ChbR and the substrate of ChbF. This Klebsiella pneumoniae (strain 342) protein is Chitooligosaccharide deacetylase.